We begin with the raw amino-acid sequence, 160 residues long: MIKKKKKKSYTSVYALGQYISMSTHKARRVIDQIRGRSYEEALMILELMPYRGCYPIFKLVYSAAANASHNKGFKETNLVISKAEVNQGNTVKKLKPRARGRSYPIKRPTCHITIVLEDRSFDQQYDEYLMYLKNPGYRNAKINLPCYETYSSGGLWDKK.

This sequence belongs to the universal ribosomal protein uL22 family. In terms of assembly, part of the 50S ribosomal subunit.

It localises to the plastid. The protein localises to the chloroplast. Functionally, this protein binds specifically to 23S rRNA. The globular domain of the protein is located near the polypeptide exit tunnel on the outside of the subunit, while an extended beta-hairpin is found that lines the wall of the exit tunnel in the center of the 70S ribosome. In Aethionema cordifolium (Lebanon stonecress), this protein is Large ribosomal subunit protein uL22c (rpl22).